Reading from the N-terminus, the 209-residue chain is Uracil phosphoribosyltransferase (209 aa).

Residues R79, R104, and 131–139 (DPMLATGGS) each bind 5-phospho-alpha-D-ribose 1-diphosphate. Residues I194 and 199-201 (GDA) contribute to the uracil site. Residue D200 coordinates 5-phospho-alpha-D-ribose 1-diphosphate.

Belongs to the UPRTase family. Requires Mg(2+) as cofactor.

The enzyme catalyses UMP + diphosphate = 5-phospho-alpha-D-ribose 1-diphosphate + uracil. It participates in pyrimidine metabolism; UMP biosynthesis via salvage pathway; UMP from uracil: step 1/1. With respect to regulation, allosterically activated by GTP. Catalyzes the conversion of uracil and 5-phospho-alpha-D-ribose 1-diphosphate (PRPP) to UMP and diphosphate. This Chromohalobacter salexigens (strain ATCC BAA-138 / DSM 3043 / CIP 106854 / NCIMB 13768 / 1H11) protein is Uracil phosphoribosyltransferase.